We begin with the raw amino-acid sequence, 295 residues long: Acetylglutamate kinase (295 aa).

Residues 66–67, Arg88, and Asn193 each bind substrate; that span reads GG.

Belongs to the acetylglutamate kinase family. ArgB subfamily.

It localises to the cytoplasm. It catalyses the reaction N-acetyl-L-glutamate + ATP = N-acetyl-L-glutamyl 5-phosphate + ADP. The protein operates within amino-acid biosynthesis; L-arginine biosynthesis; N(2)-acetyl-L-ornithine from L-glutamate: step 2/4. In terms of biological role, catalyzes the ATP-dependent phosphorylation of N-acetyl-L-glutamate. This chain is Acetylglutamate kinase, found in Rhizobium etli (strain CIAT 652).